Reading from the N-terminus, the 213-residue chain is Penicillin-binding protein activator LpoB (213 aa).

The signal sequence occupies residues 1–19; it reads MMKMNRYALVAALAIFLSG. A lipid anchor (N-palmitoyl cysteine) is attached at cysteine 20. The S-diacylglycerol cysteine moiety is linked to residue cysteine 20. Residues 26–71 are disordered; the sequence is PAPVDEVKPAPEQPAEPQQPVPVVPSVPTIPQQPGPIEHEDQTAQP. Over residues 36-50 the composition is skewed to pro residues; sequence PEQPAEPQQPVPVVP.

The protein belongs to the LpoB family. As to quaternary structure, interacts with PBP1b.

The protein localises to the cell outer membrane. Functionally, regulator of peptidoglycan synthesis that is essential for the function of penicillin-binding protein 1B (PBP1b). This Citrobacter koseri (strain ATCC BAA-895 / CDC 4225-83 / SGSC4696) protein is Penicillin-binding protein activator LpoB.